The following is a 424-amino-acid chain: L-glutamine:2-deoxy-scyllo-inosose aminotransferase (424 aa).

Lys-202 carries the post-translational modification N6-(pyridoxal phosphate)lysine.

This sequence belongs to the DegT/DnrJ/EryC1 family. L-glutamine:2-deoxy-scyllo-inosose/scyllo-inosose aminotransferase subfamily. The cofactor is pyridoxal 5'-phosphate.

The catalysed reaction is 2-deoxy-L-scyllo-inosose + L-glutamine = 2-deoxy-scyllo-inosamine + 2-oxoglutaramate. It carries out the reaction 3-amino-2,3-dideoxy-scyllo-inosose + L-glutamine = 2-deoxystreptamine + 2-oxoglutaramate. The protein operates within metabolic intermediate biosynthesis; 2-deoxystreptamine biosynthesis; 2-deoxystreptamine from D-glucose 6-phosphate: step 2/4. It participates in metabolic intermediate biosynthesis; 2-deoxystreptamine biosynthesis; 2-deoxystreptamine from D-glucose 6-phosphate: step 4/4. It functions in the pathway antibiotic biosynthesis; paromomycin biosynthesis. Catalyzes the PLP-dependent transamination of 2-deoxy-scyllo-inosose (2-DOI) to form 2-deoxy-scyllo-inosamine (2-DOIA) using L-glutamine as the amino donor. Also catalyzes the transamination of 3-amino-2,3-dideoxy-scyllo-inosose (keto-2-DOIA) into 2-deoxystreptamine (2-DOS). In Streptomyces paromomycinus (Streptomyces rimosus subsp. paromomycinus), this protein is L-glutamine:2-deoxy-scyllo-inosose aminotransferase (parS).